The sequence spans 62 residues: Photosystem II reaction center protein Z (62 aa).

A run of 2 helical transmembrane segments spans residues 8 to 28 (AVFA…VVFA) and 41 to 61 (FSGT…NSLI).

This sequence belongs to the PsbZ family. As to quaternary structure, PSII is composed of 1 copy each of membrane proteins PsbA, PsbB, PsbC, PsbD, PsbE, PsbF, PsbH, PsbI, PsbJ, PsbK, PsbL, PsbM, PsbT, PsbY, PsbZ, Psb30/Ycf12, at least 3 peripheral proteins of the oxygen-evolving complex and a large number of cofactors. It forms dimeric complexes.

Its subcellular location is the plastid. It localises to the chloroplast thylakoid membrane. May control the interaction of photosystem II (PSII) cores with the light-harvesting antenna, regulates electron flow through the 2 photosystem reaction centers. PSII is a light-driven water plastoquinone oxidoreductase, using light energy to abstract electrons from H(2)O, generating a proton gradient subsequently used for ATP formation. This is Photosystem II reaction center protein Z from Morus indica (Mulberry).